Here is a 223-residue protein sequence, read N- to C-terminus: Alpha-S2-casein (223 aa).

An N-terminal signal peptide occupies residues 1–15; that stretch reads MKFFIFTCLLAVALA. Residues S23, S24, S25, S72, S73, S74, S77, S145, S147, S151, and S159 each carry the phosphoserine modification. A repeat spans 77–141; sequence SAEVAPEEVK…AGPFTPTVNR (65 aa). The stretch at residues 159–223 is a repeat; sequence STEVFTKKTK…TNAIPYVRYL (65 aa).

The protein belongs to the alpha-casein family. In terms of tissue distribution, mammary gland specific. Secreted in milk.

The protein resides in the secreted. Its function is as follows. Important role in the capacity of milk to transport calcium phosphate. This Ovis aries (Sheep) protein is Alpha-S2-casein (CSN1S2).